Reading from the N-terminus, the 2939-residue chain is Serine/threonine-protein kinase tel1 (2939 aa).

Disordered stretches follow at residues 193–212 (GTSVRASPAPGTPATSRAGS), 695–718 (PPEDSHKATSTDQPKREEIRAADS), and 859–886 (KTRRESPTDSDPASMDLDDEFDSQETRK). Residues 697-715 (EDSHKATSTDQPKREEIRA) are compositionally biased toward basic and acidic residues. In terms of domain architecture, FAT spans 1869–2471 (IAAAAATRCG…MYQIWSGVKA (603 aa)). The 314-residue stretch at 2577–2890 (FEPQMSIASG…DKKSTKNLNE (314 aa)) folds into the PI3K/PI4K catalytic domain. The G-loop stretch occupies residues 2583–2589 (IASGVSA). The segment at 2755–2763 (GLGDRHGHN) is catalytic loop. The segment at 2775–2799 (HIDLGVAFELGRILPVPELVPFRLT) is activation loop. The interval 2869-2894 (DVVEAEDERRAGDKKSTKNLNEPSEA) is disordered. Residues 2875 to 2884 (DERRAGDKKS) are compositionally biased toward basic and acidic residues. In terms of domain architecture, FATC spans 2907–2939 (KTLSVMATVNDLINQATDERNLAVLFCGWAAYA).

Belongs to the PI3/PI4-kinase family. ATM subfamily. Associates with DNA double-strand breaks.

The protein localises to the nucleus. It localises to the chromosome. The protein resides in the telomere. It carries out the reaction L-seryl-[protein] + ATP = O-phospho-L-seryl-[protein] + ADP + H(+). The enzyme catalyses L-threonyl-[protein] + ATP = O-phospho-L-threonyl-[protein] + ADP + H(+). Functionally, serine/threonine protein kinase which activates checkpoint signaling upon genotoxic stresses such as ionizing radiation (IR), ultraviolet light (UV), or DNA replication stalling, thereby acting as a DNA damage sensor. Recognizes the substrate consensus sequence [ST]-Q. Phosphorylates histone H2A to form H2AS128ph (gamma-H2A) at sites of DNA damage, involved in the regulation of DNA damage response mechanism. Required for the control of telomere length and genome stability. This chain is Serine/threonine-protein kinase tel1 (mus-21), found in Neurospora crassa (strain ATCC 24698 / 74-OR23-1A / CBS 708.71 / DSM 1257 / FGSC 987).